The sequence spans 493 residues: Cytochrome P450 2E1 (493 aa).

298–303 (FAGTET) contacts substrate. Cys-437 serves as a coordination point for heme.

It belongs to the cytochrome P450 family. Interacts with chaperones HSP70 and HSP90; this interaction is required for initial targeting to mitochondria. Heme serves as cofactor.

It is found in the endoplasmic reticulum membrane. The protein resides in the microsome membrane. It localises to the mitochondrion inner membrane. It carries out the reaction an organic molecule + reduced [NADPH--hemoprotein reductase] + O2 = an alcohol + oxidized [NADPH--hemoprotein reductase] + H2O + H(+). It catalyses the reaction (5Z,8Z,11Z)-eicosatrienoate + reduced [NADPH--hemoprotein reductase] + O2 = 19-hydroxy-(5Z,8Z,11Z)-eicosatrienoate + oxidized [NADPH--hemoprotein reductase] + H2O + H(+). The catalysed reaction is (5Z,8Z,11Z,14Z,17Z)-eicosapentaenoate + reduced [NADPH--hemoprotein reductase] + O2 = 19-hydroxy-(5Z,8Z,11Z,14Z,17Z)-eicosapentaenoate + oxidized [NADPH--hemoprotein reductase] + H2O + H(+). The enzyme catalyses (4Z,7Z,10Z,13Z,16Z,19Z)-docosahexaenoate + reduced [NADPH--hemoprotein reductase] + O2 = 21-hydroxy-(4Z,7Z,10Z,13Z,16Z,19Z)-docosahexaenoate + oxidized [NADPH--hemoprotein reductase] + H2O + H(+). It carries out the reaction dodecanoate + reduced [NADPH--hemoprotein reductase] + O2 = 11-hydroxydodecanoate + oxidized [NADPH--hemoprotein reductase] + H2O + H(+). It catalyses the reaction tetradecanoate + reduced [NADPH--hemoprotein reductase] + O2 = 13-hydroxytetradecanoate + oxidized [NADPH--hemoprotein reductase] + H2O + H(+). The catalysed reaction is 4-nitrophenol + NADPH + O2 + H(+) = 4-nitrocatechol + NADP(+) + H2O. The protein operates within lipid metabolism; fatty acid metabolism. The omega-1 hydroxylase activity is stimulated by cytochrome b5. Its function is as follows. A cytochrome P450 monooxygenase involved in the metabolism of fatty acids. Mechanistically, uses molecular oxygen inserting one oxygen atom into a substrate, and reducing the second into a water molecule, with two electrons provided by NADPH via cytochrome P450 reductase (NADPH--hemoprotein reductase). Catalyzes the hydroxylation of carbon-hydrogen bonds. Hydroxylates fatty acids specifically at the omega-1 position displaying the highest catalytic activity for saturated fatty acids. May be involved in the oxidative metabolism of xenobiotics. This is Cytochrome P450 2E1 from Homo sapiens (Human).